We begin with the raw amino-acid sequence, 919 residues long: Kinesin-like protein KIN-UA (919 aa).

The interval 1 to 68 (MSTTSGTGGV…SGGGGDAGVP (68 aa)) is disordered. Residues 15 to 51 (GTQRSSLRTQSSASTSSGGQKASVKSKSVLRKSSPAA) show a composition bias toward low complexity. Residues 52-66 (LGGGSSKSGGGGDAG) are compositionally biased toward gly residues. Residues 70–412 (RVRVAVRLRP…IMFGQRAMKV (343 aa)) enclose the Kinesin motor domain. 155-162 (GQTGTGKT) provides a ligand contact to ATP. The tract at residues 286–305 (TRDGLSSESNGNSHMTKSLK) is disordered. Over residues 291-301 (SSESNGNSHMT) the composition is skewed to polar residues. Residues 382–390 (RTSLVITIG) carry the D-BOX motif. Coiled coils occupy residues 428–492 (SRRL…SIKK) and 530–621 (ALEE…LEQH). ARM repeat units follow at residues 650–689 (KPPVARLFEQVGLQKILSLLEAEDADVRIHAVKVVANLAA), 691–731 (EANQ…NLAM), 733–773 (ETNQ…NLCG), and 775–814 (DKLQTKLRSEGGIAALLGMVRCGHPDVLAQVARGIANFAK).

The protein belongs to the TRAFAC class myosin-kinesin ATPase superfamily. Kinesin family. Ungrouped subfamily. In terms of assembly, interacts (via C-terminus) with NEK5. Expressed in leaves, guard cells, trichomes, vascular tissues, stele of the root tip region and columella cells. Highest expression detected in guard cells.

It is found in the cytoplasm. Its subcellular location is the cytoskeleton. The chain is Kinesin-like protein KIN-UA from Arabidopsis thaliana (Mouse-ear cress).